The following is a 349-amino-acid chain: Guanine nucleotide-binding protein-like alpha-10 subunit (349 aa).

Residues 33-349 (EEIRVLIYGQ…LNITYNSVKN (317 aa)) form the G-alpha domain. The interval 36-49 (RVLIYGQKKVGVTT) is G1 motif. The segment at 168 to 176 (DLNFIKLTQ) is G2 motif. The segment at 191–200 (IKMIEMGIQT) is G3 motif. Residues 195–199 (EMGIQ) and 266–269 (NKKD) contribute to the GTP site. Residues 262 to 269 (IVFFNKKD) are G4 motif. Positions 320-325 (NEESEV) are G5 motif.

The protein belongs to the G-alpha family.

This is Guanine nucleotide-binding protein-like alpha-10 subunit (gpaJ) from Dictyostelium discoideum (Social amoeba).